We begin with the raw amino-acid sequence, 412 residues long: MTTIAIFTKNVLLAIAFALFAQGAAIPDPAKRDDNPGFVALDFEVTRKPLDVNATSELSKRSSPSSPLYFEGPSYGIRVSVGSNKQEQQVVLDTGSSDFWVVDSSASCQKGNCKQYGTFDPHSSTSFKSLGSSFRSIGYGDKSSSIGTWGQDTIYLGGTSITNQRFADVTSTSVNQGILGVGRVETESANPPYDNVPITLKKQGKIKTNAYSLYLNSPGAATGTIIFGGVDNAKYSGKLIEEPLVSDRYLAVNLKSLNYNGDNSNAGFGVVVDSGTTISYLPDSIVNDLANKVGAYLEPVGLGNELYFIDCNANPQGSASFTFDNGAKITVPLSEFVLQSTANACVWGLQSSDRQNVPPILGDNFLRHAYAFQLDKETVLSRSGEVHFCLKCFSNLETSIVWKAFFYNRYIQ.

Residues 1-25 (MTTIAIFTKNVLLAIAFALFAQGAA) constitute a signal peptide (or 18, or 21). Residues 26–61 (IPDPAKRDDNPGFVALDFEVTRKPLDVNATSELSKR) constitute a propeptide, activation peptide. Residue N53 is glycosylated (N-linked (GlcNAc...) asparagine). The Peptidase A1 domain occupies 75–383 (YGIRVSVGSN…LDKETVLSRS (309 aa)). D93 is an active-site residue. C108 and C113 are joined by a disulfide. Residue D273 is part of the active site. Cysteines 311 and 345 form a disulfide.

The protein belongs to the peptidase A1 family. O-glycosylated.

Its subcellular location is the secreted. The catalysed reaction is Preferential cleavage at the carboxyl of hydrophobic amino acids, but fails to cleave 15-Leu-|-Tyr-16, 16-Tyr-|-Leu-17 and 24-Phe-|-Phe-25 of insulin B chain. Activates trypsinogen, and degrades keratin.. This is Candidapepsin-2 (SAPP2) from Candida parapsilosis (Yeast).